Here is a 202-residue protein sequence, read N- to C-terminus: MALVIGLTGGIASGKTTVANLFQQHFAIDIVDADIVARQVVAPGSAGLAAIVDHFGADILTREGELDRGQLRQRIFAHAEEKQWLNALLHPMIRRKMIEDLAQVSSPYALLVVPLLVENQLQTLCDRVLVVDVEEKTQLQRTMDRDGVDEQQVRAILKAQASRHERLALADDVIKNESKDQDLLQQITDLHQKYLAMSKQNR.

The region spanning 4-201 is the DPCK domain; that stretch reads VIGLTGGIAS…QKYLAMSKQN (198 aa). 12–17 contributes to the ATP binding site; sequence ASGKTT.

Belongs to the CoaE family.

The protein resides in the cytoplasm. It carries out the reaction 3'-dephospho-CoA + ATP = ADP + CoA + H(+). It participates in cofactor biosynthesis; coenzyme A biosynthesis; CoA from (R)-pantothenate: step 5/5. Catalyzes the phosphorylation of the 3'-hydroxyl group of dephosphocoenzyme A to form coenzyme A. In Vibrio vulnificus (strain YJ016), this protein is Dephospho-CoA kinase.